The sequence spans 856 residues: DNA mismatch repair protein MutS (856 aa).

Residue 617-624 coordinates ATP; that stretch reads GPNMGGKS.

Belongs to the DNA mismatch repair MutS family.

In terms of biological role, this protein is involved in the repair of mismatches in DNA. It is possible that it carries out the mismatch recognition step. This protein has a weak ATPase activity. The sequence is that of DNA mismatch repair protein MutS from Psychromonas ingrahamii (strain DSM 17664 / CCUG 51855 / 37).